The primary structure comprises 249 residues: Phosphoribosylaminoimidazole-succinocarboxamide synthase (249 aa).

This sequence belongs to the SAICAR synthetase family.

It carries out the reaction 5-amino-1-(5-phospho-D-ribosyl)imidazole-4-carboxylate + L-aspartate + ATP = (2S)-2-[5-amino-1-(5-phospho-beta-D-ribosyl)imidazole-4-carboxamido]succinate + ADP + phosphate + 2 H(+). It participates in purine metabolism; IMP biosynthesis via de novo pathway; 5-amino-1-(5-phospho-D-ribosyl)imidazole-4-carboxamide from 5-amino-1-(5-phospho-D-ribosyl)imidazole-4-carboxylate: step 1/2. This chain is Phosphoribosylaminoimidazole-succinocarboxamide synthase, found in Roseiflexus sp. (strain RS-1).